The following is a 128-amino-acid chain: Large ribosomal subunit protein uL24 (128 aa).

The segment at 105 to 128 (KAKSRQVGKEKGKYKEETIEKMQE) is disordered.

It belongs to the universal ribosomal protein uL24 family. As to quaternary structure, component of the large ribosomal subunit.

The protein localises to the cytoplasm. Component of the large ribosomal subunit. The ribosome is a large ribonucleoprotein complex responsible for the synthesis of proteins in the cell. In Gallus gallus (Chicken), this protein is Large ribosomal subunit protein uL24 (RPL26).